We begin with the raw amino-acid sequence, 378 residues long: Ferredoxin--NADP reductase, root isozyme, chloroplastic (378 aa).

The span at 1 to 17 shows a compositional bias: low complexity; sequence MATAVASQVAVSAPAGS. The interval 1–27 is disordered; sequence MATAVASQVAVSAPAGSDRGLRSSGIQ. Residues 1–62 constitute a chloroplast transit peptide; it reads MATAVASQVA…PRHANKVLCM (62 aa). One can recognise an FAD-binding FR-type domain in the interval 93-221; sequence KEPYTATIVS…TGPSGKIMLL (129 aa). Residues 153 to 156, 174 to 176, Tyr180, 195 to 197, and Thr237 each bind FAD; these read RLYS, CVR, and VCS. 2 residues coordinate NADP(+): Ser156 and Arg176. Residues Thr237, 269-270, 299-300, Lys309, 337-338, and Glu376 contribute to the NADP(+) site; these read VA, SR, and GL.

It belongs to the ferredoxin--NADP reductase type 1 family. It depends on FAD as a cofactor.

The protein resides in the plastid. It localises to the chloroplast. It catalyses the reaction 2 reduced [2Fe-2S]-[ferredoxin] + NADP(+) + H(+) = 2 oxidized [2Fe-2S]-[ferredoxin] + NADPH. Its pathway is energy metabolism; photosynthesis. In terms of biological role, may play a key role in regulating the relative amounts of cyclic and non-cyclic electron flow to meet the demands of the plant for ATP and reducing power. Is involved in nitrate assimilation. This Oryza sativa subsp. japonica (Rice) protein is Ferredoxin--NADP reductase, root isozyme, chloroplastic.